The primary structure comprises 561 residues: Dihydroxy-acid dehydratase (561 aa).

Position 50 (Cys-50) interacts with [2Fe-2S] cluster. Asp-82 contributes to the Mg(2+) binding site. Cys-123 contributes to the [2Fe-2S] cluster binding site. Mg(2+) is bound by residues Asp-124 and Lys-125. At Lys-125 the chain carries N6-carboxylysine. Cys-195 contacts [2Fe-2S] cluster. Residue Glu-447 coordinates Mg(2+). Ser-473 acts as the Proton acceptor in catalysis.

This sequence belongs to the IlvD/Edd family. As to quaternary structure, homodimer. [2Fe-2S] cluster serves as cofactor. Mg(2+) is required as a cofactor.

The enzyme catalyses (2R)-2,3-dihydroxy-3-methylbutanoate = 3-methyl-2-oxobutanoate + H2O. The catalysed reaction is (2R,3R)-2,3-dihydroxy-3-methylpentanoate = (S)-3-methyl-2-oxopentanoate + H2O. Its pathway is amino-acid biosynthesis; L-isoleucine biosynthesis; L-isoleucine from 2-oxobutanoate: step 3/4. The protein operates within amino-acid biosynthesis; L-valine biosynthesis; L-valine from pyruvate: step 3/4. Its function is as follows. Functions in the biosynthesis of branched-chain amino acids. Catalyzes the dehydration of (2R,3R)-2,3-dihydroxy-3-methylpentanoate (2,3-dihydroxy-3-methylvalerate) into 2-oxo-3-methylpentanoate (2-oxo-3-methylvalerate) and of (2R)-2,3-dihydroxy-3-methylbutanoate (2,3-dihydroxyisovalerate) into 2-oxo-3-methylbutanoate (2-oxoisovalerate), the penultimate precursor to L-isoleucine and L-valine, respectively. This is Dihydroxy-acid dehydratase from Chloroflexus aurantiacus (strain ATCC 29366 / DSM 635 / J-10-fl).